We begin with the raw amino-acid sequence, 902 residues long: Gamma-tubulin complex component 2 (902 aa).

The residue at position 83 (tyrosine 83) is a Phosphotyrosine. The interval 874–902 is disordered; it reads AERSQKATPQVPVLRGPPAPAPRVAVTAQ.

This sequence belongs to the TUBGCP family. In terms of assembly, component of the gamma-tubulin ring complex (gTuRC) consisting of TUBGCP2, TUBGCP3, TUBGCP4, TUBGCP5 and TUBGCP6 and gamma-tubulin TUBG1 or TUBG2. TUBGCP2, TUBGCP3, TUBGCP4, TUBGCP5 and TUBGCP6 assemble in a 5:5:2:1:1 stoichiometry; each is associated with a gamma-tubulin, thereby arranging 14 gamma-tubulins in a helical manner. Gamma-tubulin at the first position is blocked by TUBGCP3 at the last position, allowing 13 protafilaments to grow into a microtubule. The gTuRC (via TUBGCP3 and TUBGCP6) interacts with ACTB and MZT1; the interactions form a luminal bridge that stabilizes the initial structure during complex assembly. The gTuRC (via TUBGCP2) interacts with MZT2A/MZT2B and CDK5RAP2 (via CM1 motif); the interactions play a role in gTuRC activation. Interacts with ATF5; the ATF5:PCNT:polyglutamylated tubulin (PGT) tripartite unites the mother centriole and the pericentriolar material (PCM) in the centrosome. As to expression, ubiquitously expressed.

The protein localises to the cytoplasm. It localises to the cytoskeleton. The protein resides in the microtubule organizing center. It is found in the centrosome. Its function is as follows. Component of the gamma-tubulin ring complex (gTuRC) which mediates microtubule nucleation. The gTuRC regulates the minus-end nucleation of alpha-beta tubulin heterodimers that grow into microtubule protafilaments, a critical step in centrosome duplication and spindle formation. Plays a role in neuronal migration. This is Gamma-tubulin complex component 2 (TUBGCP2) from Homo sapiens (Human).